The primary structure comprises 67 residues: Protein C' (67 aa).

Belongs to the rhabdoviruses C protein family.

In terms of biological role, seems to stimulates transcription by the viral polymerase. May play a role in viral pathogenesis or transmission by insects vectors. In Vesicular stomatitis Indiana virus (strain 85CLB South America) (VSIV), this protein is Protein C' (P).